The sequence spans 418 residues: Phosphatidylcholine:ceramide cholinephosphotransferase 1 (418 aa).

Positions 12-75 (WSPKKVADWL…LDMIETLKME (64 aa)) constitute an SAM domain. Ser-13 carries the post-translational modification Phosphoserine. 5 helical membrane passes run 141 to 161 (FLAF…ISVV), 189 to 209 (FSIC…QWLL), 220 to 240 (FFCI…VTTL), 281 to 301 (MCGD…YLFI), and 309 to 329 (LWWY…CILL). His-290 is a catalytic residue. Catalysis depends on residues His-333 and Asp-337. Residues 335 to 352 (TVDVVVAYYITTRLFWWY) traverse the membrane as a helical segment.

It belongs to the sphingomyelin synthase family. In terms of tissue distribution, widely expressed. Highest expression in the cardiovascular system.

Its subcellular location is the golgi apparatus membrane. The enzyme catalyses an N-acylsphing-4-enine + a 1,2-diacyl-sn-glycero-3-phosphocholine = a sphingomyelin + a 1,2-diacyl-sn-glycerol. The catalysed reaction is 1-(9Z-octadecenoyl)-2-acyl-sn-3-glycerol + a sphingomyelin = a 1-(9Z-octadecenoyl)-2-acyl-sn-glycero-3-phosphocholine + an N-acylsphing-4-enine. It carries out the reaction N-hexadecanoylsphinganine + a 1,2-diacyl-sn-glycero-3-phosphocholine = N-hexadecanoyl-sphinganine-1-phosphocholine + a 1,2-diacyl-sn-glycerol. It catalyses the reaction N-hexadecanoyl-(4R)-hydroxysphinganine + a 1,2-diacyl-sn-glycero-3-phosphocholine = N-hexadecanoyl-(4R)-hydroxysphinganine-phosphocholine + a 1,2-diacyl-sn-glycerol. The enzyme catalyses an N-acylsphing-4-enine + a 1,2-diacyl-sn-glycero-3-phosphoethanolamine = an N-acylsphing-4-enine 1-phosphoethanolamine + a 1,2-diacyl-sn-glycerol. The protein operates within sphingolipid metabolism. Major sphingomyelin synthase at the Golgi apparatus. Catalyzes the reversible transfer of phosphocholine moiety in sphingomyelin biosynthesis: in the forward reaction transfers phosphocholine head group of phosphatidylcholine (PC) on to ceramide (CER) to form ceramide phosphocholine (sphingomyelin, SM) and diacylglycerol (DAG) as by-product, and in the reverse reaction transfers phosphocholine from SM to DAG to form PC and CER. The direction of the reaction depends on the levels of CER and DAG in Golgi membranes. Converts the newly synthesized CER, that is transported from the endoplasmic reticulum to the trans-Golgi by the Cer transport protein (CERT), to SM. Can form a heteromeric complex with glucosylceramide synthase (GCS) increasing SMS activity and reducing glucosylceramide synthesis, a critical mechanism that controls the metabolic fate of CER in the Golgi. Does not use free phosphorylcholine or CDP-choline as donor. Can also transfer phosphoethanolamine head group of phosphatidylethanolamine (PE) on to CER to form ceramide phosphoethanolamine (CPE). Regulates receptor-mediated signal transduction via mitogenic DAG and proapoptotic CER, as well as via SM, a structural component of membrane rafts that serve as platforms for signal transduction and protein sorting. Plays a role in secretory transport via regulation of DAG pool at the Golgi apparatus and its downstream effects on PRKD1. This chain is Phosphatidylcholine:ceramide cholinephosphotransferase 1 (SGMS1), found in Sus scrofa (Pig).